Consider the following 906-residue polypeptide: Protein translocase subunit SecA (906 aa).

ATP-binding positions include Gln-87, Gly-105 to Thr-109, and Asp-521. The span at Ser-849–Ser-865 shows a compositional bias: low complexity. Residues Ser-849–Lys-897 are disordered. The span at Thr-866–Pro-876 shows a compositional bias: polar residues. 4 residues coordinate Zn(2+): Cys-891, Cys-893, Cys-902, and Cys-903.

The protein belongs to the SecA family. Monomer and homodimer. Part of the essential Sec protein translocation apparatus which comprises SecA, SecYEG and auxiliary proteins SecDF-YajC and YidC. Requires Zn(2+) as cofactor.

Its subcellular location is the cell inner membrane. It is found in the cytoplasm. The catalysed reaction is ATP + H2O + cellular proteinSide 1 = ADP + phosphate + cellular proteinSide 2.. Part of the Sec protein translocase complex. Interacts with the SecYEG preprotein conducting channel. Has a central role in coupling the hydrolysis of ATP to the transfer of proteins into and across the cell membrane, serving both as a receptor for the preprotein-SecB complex and as an ATP-driven molecular motor driving the stepwise translocation of polypeptide chains across the membrane. The polypeptide is Protein translocase subunit SecA (Dichelobacter nodosus (strain VCS1703A)).